The following is a 145-amino-acid chain: Large ribosomal subunit protein uL11 (145 aa).

It belongs to the universal ribosomal protein uL11 family. As to quaternary structure, part of the ribosomal stalk of the 50S ribosomal subunit. Interacts with L10 and the large rRNA to form the base of the stalk. L10 forms an elongated spine to which L12 dimers bind in a sequential fashion forming a multimeric L10(L12)X complex. In terms of processing, one or more lysine residues are methylated.

Functionally, forms part of the ribosomal stalk which helps the ribosome interact with GTP-bound translation factors. In Coxiella burnetii (strain Dugway 5J108-111), this protein is Large ribosomal subunit protein uL11.